Here is a 950-residue protein sequence, read N- to C-terminus: Xylosyltransferase 1 (950 aa).

Topologically, residues 1–17 (MVAAPSARRLVRRSHSA) are cytoplasmic. Residues 18–38 (LLAALTVLLLQTLVGWNFSSL) traverse the membrane as a helical; Signal-anchor for type II membrane protein segment. Residues 39–950 (HSGAGERRGG…GAVKPDGRLR (912 aa)) are Lumenal-facing. Residues 42–246 (AGERRGGAAA…ELRYDQPPKC (205 aa)) form a disordered region. The span at 91 to 104 (PPARARARALAGCP) shows a compositional bias: low complexity. A compositionally biased stretch (basic and acidic residues) spans 134-150 (KVRTDSNNENSVPKDFE). The segment covering 152–161 (VDNSNFAPRT) has biased composition (polar residues). Basic and acidic residues predominate over residues 166-193 (HQPELAKKPPSRQKELLKRRLEQEEKGK). Asn-215 carries N-linked (GlcNAc...) asparagine glycosylation. Cystine bridges form between Cys-246/Cys-274, Cys-290/Cys-531, Cys-550/Cys-563, and Cys-552/Cys-561. Residues Val-322, Asp-350, and 379–381 (TIW) contribute to the UDP-alpha-D-xylose site. Asn-410 is a glycosylation site (N-linked (GlcNAc...) asparagine). UDP-alpha-D-xylose is bound at residue 483–484 (DW). UDP-alpha-D-xylose-binding positions include Ser-564 and 587–588 (RK). 2 disulfides stabilise this stretch: Cys-664–Cys-918 and Cys-911–Cys-924. Asn-768 carries N-linked (GlcNAc...) asparagine glycosylation. Residues 931-950 (SFSPDPKSELGAVKPDGRLR) form a disordered region.

The protein belongs to the glycosyltransferase 14 family. XylT subfamily. Monomer. It depends on a divalent metal cation as a cofactor. Post-translationally, contains 7 disulfide bonds. N-glycosylated.

It is found in the golgi apparatus membrane. It carries out the reaction UDP-alpha-D-xylose + L-seryl-[protein] = 3-O-(beta-D-xylosyl)-L-seryl-[protein] + UDP + H(+). Its pathway is glycan metabolism; chondroitin sulfate biosynthesis. The protein operates within glycan metabolism; heparan sulfate biosynthesis. Catalyzes the first step in the biosynthesis of chondroitin sulfate and dermatan sulfate proteoglycans, such as DCN. Transfers D-xylose from UDP-D-xylose to specific serine residues of the core protein. Required for normal maturation of chondrocytes during bone development, normal onset of ossification and normal embryonic and postnatal skeleton development, especially of the long bones. The protein is Xylosyltransferase 1 (XYLT1) of Canis lupus familiaris (Dog).